Consider the following 192-residue polypeptide: uncharacterized protein (192 aa).

The next 2 helical transmembrane spans lie at 31 to 51 (IVET…YVYE) and 119 to 139 (VPGA…LWEI).

It is found in the cell membrane. This is an uncharacterized protein from Thermotoga maritima (strain ATCC 43589 / DSM 3109 / JCM 10099 / NBRC 100826 / MSB8).